The sequence spans 277 residues: Venom serine protease (277 aa).

A signal peptide spans 1 to 19 (MNCGKIILLFITIIGVAKS). The Peptidase S1 domain occupies 34-269 (IVNGVETEIN…FMEFIHNATI (236 aa)). Residues Cys-60 and Cys-76 are joined by a disulfide bond. His-75 serves as the catalytic Charge relay system. N-linked (GlcNAc...) asparagine glycosylation is found at Asn-84 and Asn-104. Asp-126 acts as the Charge relay system in catalysis. 2 N-linked (GlcNAc...) asparagine glycosylation sites follow: Asn-155 and Asn-158. Disulfide bonds link Cys-192–Cys-207 and Cys-216–Cys-246. Residue Asn-218 is glycosylated (N-linked (GlcNAc...) asparagine). Ser-220 (charge relay system) is an active-site residue. Asn-266 carries N-linked (GlcNAc...) asparagine glycosylation.

The protein belongs to the peptidase S1 family. As to expression, expressed by the venom duct.

Its subcellular location is the secreted. The chain is Venom serine protease from Polistes dominula (European paper wasp).